The following is a 407-amino-acid chain: Cation efflux system protein CusB (407 aa).

Residues 1-28 (MKKIALIIGSMIAGGIISAAGFTWVAKA) form the signal peptide.

It belongs to the membrane fusion protein (MFP) (TC 8.A.1) family. As to quaternary structure, the cus efflux system is composed of CusA, CusB, CusC and CusF.

Functionally, part of a cation efflux system that mediates resistance to copper and silver. The chain is Cation efflux system protein CusB (cusB) from Escherichia coli (strain K12).